A 365-amino-acid polypeptide reads, in one-letter code: Cobalt-precorrin-5B C(1)-methyltransferase (365 aa).

This sequence belongs to the CbiD family.

It catalyses the reaction Co-precorrin-5B + S-adenosyl-L-methionine = Co-precorrin-6A + S-adenosyl-L-homocysteine. It functions in the pathway cofactor biosynthesis; adenosylcobalamin biosynthesis; cob(II)yrinate a,c-diamide from sirohydrochlorin (anaerobic route): step 6/10. Its function is as follows. Catalyzes the methylation of C-1 in cobalt-precorrin-5B to form cobalt-precorrin-6A. The polypeptide is Cobalt-precorrin-5B C(1)-methyltransferase (Pseudomonas fluorescens (strain Pf0-1)).